A 184-amino-acid chain; its full sequence is UPF0215 protein MJ1150 (184 aa).

The protein belongs to the UPF0215 family.

The protein is UPF0215 protein MJ1150 of Methanocaldococcus jannaschii (strain ATCC 43067 / DSM 2661 / JAL-1 / JCM 10045 / NBRC 100440) (Methanococcus jannaschii).